The chain runs to 60 residues: Large ribosomal subunit protein bL32 (60 aa).

The protein belongs to the bacterial ribosomal protein bL32 family.

The protein is Large ribosomal subunit protein bL32 of Borrelia turicatae (strain 91E135).